The following is a 345-amino-acid chain: Phosphate acyltransferase (345 aa).

This sequence belongs to the PlsX family. In terms of assembly, homodimer. Probably interacts with PlsY.

The protein localises to the cytoplasm. The enzyme catalyses a fatty acyl-[ACP] + phosphate = an acyl phosphate + holo-[ACP]. The protein operates within lipid metabolism; phospholipid metabolism. In terms of biological role, catalyzes the reversible formation of acyl-phosphate (acyl-PO(4)) from acyl-[acyl-carrier-protein] (acyl-ACP). This enzyme utilizes acyl-ACP as fatty acyl donor, but not acyl-CoA. The sequence is that of Phosphate acyltransferase from Anaplasma phagocytophilum (strain HZ).